The sequence spans 245 residues: Aliphatic sulfonates import ATP-binding protein SsuB (245 aa).

Positions 6 to 225 (VTVRGLRRAF…SRGDEGFDDL (220 aa)) constitute an ABC transporter domain. 38–45 (GLSGSGKS) provides a ligand contact to ATP.

It belongs to the ABC transporter superfamily. Aliphatic sulfonates importer (TC 3.A.1.17.2) family. As to quaternary structure, the complex is composed of two ATP-binding proteins (SsuB), two transmembrane proteins (SsuC) and a solute-binding protein (SsuA).

The protein resides in the cell membrane. The enzyme catalyses ATP + H2O + aliphatic sulfonate-[sulfonate-binding protein]Side 1 = ADP + phosphate + aliphatic sulfonateSide 2 + [sulfonate-binding protein]Side 1.. Functionally, part of the ABC transporter complex SsuABC involved in aliphatic sulfonates import. Responsible for energy coupling to the transport system. The chain is Aliphatic sulfonates import ATP-binding protein SsuB from Mycobacterium sp. (strain MCS).